Reading from the N-terminus, the 436-residue chain is Chromosomal replication initiator protein DnaA (436 aa).

A domain I, interacts with DnaA modulators region spans residues Met1–Val80. The interval Val80–Pro100 is domain II. The tract at residues Lys101 to Ala317 is domain III, AAA+ region. 4 residues coordinate ATP: Gly145, Gly147, Lys148, and Thr149. Positions Ser318–Thr436 are domain IV, binds dsDNA.

This sequence belongs to the DnaA family. In terms of assembly, oligomerizes as a right-handed, spiral filament on DNA at oriC.

It localises to the cytoplasm. The catalysed reaction is ATP + H2O = ADP + phosphate + H(+). Functionally, plays an essential role in the initiation and regulation of chromosomal replication. ATP-DnaA binds to the origin of replication (oriC) to initiate formation of the DNA replication initiation complex once per cell cycle. Binds the DnaA box (a 9 base pair repeat at the origin) and separates the double-stranded (ds)DNA. Forms a right-handed helical filament on oriC DNA; dsDNA binds to the exterior of the filament while single-stranded (ss)DNA is stabiized in the filament's interior. The ATP-DnaA-oriC complex binds and stabilizes one strand of the AT-rich DNA unwinding element (DUE), permitting loading of DNA polymerase. After initiation quickly degrades to an ADP-DnaA complex that is not apt for DNA replication. Binds acidic phospholipids. In terms of biological role, the DnaA box consensus is 5'-TTATC[CA]A[CA]A-3' in this bacterium; oriC consists of 13 clustered DnaA boxes and a 40 base pair AT-rich region. ATP-DnaA binds cooperatively to multiple DnaA boxes, while ADP-DnaA binds with low cooperativity to the individual DnaA boxes. About 16-18 DnaA protein molecules bind their sites in oriC. Has a slow ATPase activity. Binds linear and supercoiled DNA. The sequence is that of Chromosomal replication initiator protein DnaA from Thermus thermophilus (strain ATCC 27634 / DSM 579 / HB8).